The following is a 318-amino-acid chain: Inactive dihydropteroate synthase 2 (318 aa).

The segment at 1–25 (MRSTPPASAGRSTPPALAGHSTPPA) is disordered. Residues 42 to 299 (ALIMAIVNRT…EVAATRRVLE (258 aa)) form the Pterin-binding domain.

The protein belongs to the DHPS family. In terms of assembly, homodimer.

Functionally, has very low affinity for the DHPS substrate 6-hydroxymethyl-7,8-dihydropterin-pyrophosphate, but can bind the inhibitor dapsone. Seems to lack dihydropteroate synthase activity, and does probably not function in folate metabolism. The protein is Inactive dihydropteroate synthase 2 (folP2) of Mycobacterium bovis (strain ATCC BAA-935 / AF2122/97).